Consider the following 580-residue polypeptide: Multidrug resistance-like ATP-binding protein MdlB (580 aa).

The region spanning 25–310 is the ABC transmembrane type-1 domain; that stretch reads LILAFIFLLS…ITIQQSVLQQ (286 aa). 6 helical membrane passes run 26 to 46, 61 to 81, 150 to 170, 173 to 193, 247 to 267, and 268 to 288; these read ILAF…PILI, LLII…SVFL, IILI…MALV, FILP…TPLL, LDGF…LCNF, and MFLF…YAFI. The ABC transporter domain occupies 341 to 575; that stretch reads INIQNVSFYH…KSCYYKMYKF (235 aa). 375-382 serves as a coordination point for ATP; sequence GHTGSGKS.

This sequence belongs to the ABC transporter superfamily. Drug exporter-2 (TC 3.A.1.117) family.

It is found in the cell membrane. It catalyses the reaction ATP + H2O + xenobioticSide 1 = ADP + phosphate + xenobioticSide 2.. In Buchnera aphidicola subsp. Acyrthosiphon pisum (strain APS) (Acyrthosiphon pisum symbiotic bacterium), this protein is Multidrug resistance-like ATP-binding protein MdlB (mdlB).